The following is a 350-amino-acid chain: Galactokinase (350 aa).

A substrate-binding site is contributed by 14-17 (EHTD). Residues Ser-46 and 96-102 (GAGLSSS) contribute to the ATP site. Residues Ser-102 and Glu-134 each contribute to the Mg(2+) site. Asp-146 serves as the catalytic Proton acceptor. Tyr-196 is a substrate binding site.

The protein belongs to the GHMP kinase family. GalK subfamily.

The protein localises to the cytoplasm. The enzyme catalyses alpha-D-galactose + ATP = alpha-D-galactose 1-phosphate + ADP + H(+). Its pathway is carbohydrate metabolism; galactose metabolism. Its function is as follows. Catalyzes the transfer of the gamma-phosphate of ATP to D-galactose to form alpha-D-galactose-1-phosphate (Gal-1-P). The sequence is that of Galactokinase from Thermotoga petrophila (strain ATCC BAA-488 / DSM 13995 / JCM 10881 / RKU-1).